The following is a 494-amino-acid chain: Ribosomal lysine N-methyltransferase 4 (494 aa).

Positions 25-265 constitute an SET domain; the sequence is PKIEIKDLCC…KNEQVYNIYG (241 aa). Residue Tyr264 coordinates S-adenosyl-L-methionine.

This sequence belongs to the class V-like SAM-binding methyltransferase superfamily. Histone-lysine methyltransferase family. SETD6 subfamily.

The protein localises to the nucleus. S-adenosyl-L-methionine-dependent protein-lysine N-methyltransferase that monomethylates 60S ribosomal protein L42 (RPL42A and RPL42B) at 'Lys-55'. In Saccharomyces cerevisiae (strain ATCC 204508 / S288c) (Baker's yeast), this protein is Ribosomal lysine N-methyltransferase 4.